We begin with the raw amino-acid sequence, 152 residues long: Leukocyte-associated immunoglobulin-like receptor 2 (152 aa).

The N-terminal stretch at 1-21 (MSPHLTALLGLVLCLAQTIHT) is a signal peptide. The Ig-like C2-type domain maps to 29–117 (PSISAEPGTV…GWSEHSDFLE (89 aa)). An intrachain disulfide couples C49 to C101. The interval 120-152 (VKESSGGPDSPDTEPGSSAGTVPGTEASGFDAP) is disordered.

It localises to the secreted. The chain is Leukocyte-associated immunoglobulin-like receptor 2 (LAIR2) from Homo sapiens (Human).